We begin with the raw amino-acid sequence, 193 residues long: 7-methyl-GTP pyrophosphatase (193 aa).

Asp68 serves as the catalytic Proton acceptor.

This sequence belongs to the Maf family. YceF subfamily. A divalent metal cation serves as cofactor.

Its subcellular location is the cytoplasm. The enzyme catalyses N(7)-methyl-GTP + H2O = N(7)-methyl-GMP + diphosphate + H(+). In terms of biological role, nucleoside triphosphate pyrophosphatase that hydrolyzes 7-methyl-GTP (m(7)GTP). May have a dual role in cell division arrest and in preventing the incorporation of modified nucleotides into cellular nucleic acids. The polypeptide is 7-methyl-GTP pyrophosphatase (Chromobacterium violaceum (strain ATCC 12472 / DSM 30191 / JCM 1249 / CCUG 213 / NBRC 12614 / NCIMB 9131 / NCTC 9757 / MK)).